The chain runs to 663 residues: 4-hydroxy-3-methylbut-2-en-1-yl diphosphate synthase (flavodoxin) (663 aa).

The [4Fe-4S] cluster site is built by Cys568, Cys571, Cys602, and Glu609.

This sequence belongs to the IspG family. The cofactor is [4Fe-4S] cluster.

It catalyses the reaction (2E)-4-hydroxy-3-methylbut-2-enyl diphosphate + oxidized [flavodoxin] + H2O + 2 H(+) = 2-C-methyl-D-erythritol 2,4-cyclic diphosphate + reduced [flavodoxin]. Its pathway is isoprenoid biosynthesis; isopentenyl diphosphate biosynthesis via DXP pathway; isopentenyl diphosphate from 1-deoxy-D-xylulose 5-phosphate: step 5/6. In terms of biological role, converts 2C-methyl-D-erythritol 2,4-cyclodiphosphate (ME-2,4cPP) into 1-hydroxy-2-methyl-2-(E)-butenyl 4-diphosphate. The protein is 4-hydroxy-3-methylbut-2-en-1-yl diphosphate synthase (flavodoxin) of Leptospira borgpetersenii serovar Hardjo-bovis (strain L550).